A 649-amino-acid polypeptide reads, in one-letter code: Solute carrier family 22 member 17 (649 aa).

Positions 1-70 (MAPRVATGTP…GGDGLGSSLS (70 aa)) are disordered. Polar residues predominate over residues 24–34 (VEITPTSNGQV). Residues 47-57 (QGEREREREGE) are compositionally biased toward basic and acidic residues. N-linked (GlcNAc...) asparagine glycans are attached at residues Asn134 and Asn143. 11 helical membrane passes run 211-231 (VILE…FLGY), 240-260 (GIVL…AAAG), 265-285 (VMAL…GVYL), 300-320 (ALAG…LALV), 330-350 (MITA…FLES), 414-433 (NIWK…HAIR), 448-468 (FYLC…FLGV), 477-497 (GILL…LGLW), 526-546 (FSVL…LLAA), 557-577 (GLGL…AQRL), and 584-604 (FLQH…IMLL).

Belongs to the major facilitator (TC 2.A.1) superfamily. Organic cation transporter (TC 2.A.1.19) family. Expressed in brain.

It is found in the cell membrane. The protein resides in the vacuole membrane. Its function is as follows. Cell surface receptor for LCN2 (24p3) that plays a key role in iron homeostasis and transport. Able to bind iron-bound LCN2 (holo-24p3), followed by internalization of holo-24p3 and release of iron, thereby increasing intracellular iron concentration and leading to inhibition of apoptosis. Also binds iron-free LCN2 (apo-24p3), followed by internalization of apo-24p3 and its association with an intracellular siderophore, leading to iron chelation and iron transfer to the extracellular medium, thereby reducing intracellular iron concentration and resulting in apoptosis. In Homo sapiens (Human), this protein is Solute carrier family 22 member 17 (SLC22A17).